Consider the following 306-residue polypeptide: Low-density lipoprotein receptor class A domain-containing protein 4 (306 aa).

Over 1-64 (MPEAGFQATN…PPGIFNSELE (64 aa)) the chain is Lumenal. Residues 16–48 (KFTCTSGKCLYLGSLVCNQQNDCGDNSDEENCL) form the LDL-receptor class A domain. Disulfide bonds link Cys19/Cys38 and Cys32/Cys47. A helical transmembrane segment spans residues 65-85 (FAQIIIIVVVVTVMVVVIVCL). At 86-306 (LNHYKVSTRS…GKDRKPGNLV (221 aa)) the chain is on the cytoplasmic side. The short motif at 180-183 (PPPY) is the PPxY motif 1 element. Residues 208-211 (PPNR) carry the SMAD interaction motif (SIM) motif. Residues 252–255 (PPTY) carry the PPxY motif 2 motif. Positions 286–306 (NNAESTIVPIKGKDRKPGNLV) are disordered. Over residues 296 to 306 (KGKDRKPGNLV) the composition is skewed to basic and acidic residues.

The protein belongs to the PMEPA1 family. In terms of assembly, interacts with PMEPA1. Interacts (via the SMAD interaction motif) with SMAD2 and SMAD3. Expressed in lymphocytes.

It is found in the early endosome membrane. In terms of biological role, functions as a negative regulator of TGF-beta signaling and thereby probably plays a role in cell proliferation, differentiation, apoptosis, motility, extracellular matrix production and immunosuppression. In the canonical TGF-beta pathway, ZFYVE9/SARA recruits the intracellular signal transducer and transcriptional modulators SMAD2 and SMAD3 to the TGF-beta receptor. Phosphorylated by the receptor, SMAD2 and SMAD3 then form a heteromeric complex with SMAD4 that translocates to the nucleus to regulate transcription. Through interaction with SMAD2 and SMAD3, LDLRAD4 may compete with ZFYVE9 and SMAD4 and prevent propagation of the intracellular signal. This Homo sapiens (Human) protein is Low-density lipoprotein receptor class A domain-containing protein 4 (LDLRAD4).